The following is a 210-amino-acid chain: Oligoribonuclease (210 aa).

The 166-residue stretch at L12–L177 folds into the Exonuclease domain. Residue Y134 is part of the active site.

It belongs to the oligoribonuclease family.

It is found in the cytoplasm. Its function is as follows. 3'-to-5' exoribonuclease specific for small oligoribonucleotides. In Corynebacterium diphtheriae (strain ATCC 700971 / NCTC 13129 / Biotype gravis), this protein is Oligoribonuclease.